The primary structure comprises 335 residues: Fructose-1,6-bisphosphatase class 1 (335 aa).

Mg(2+)-binding residues include E92, D114, L116, and D117. Substrate is bound by residues 117-120, N209, and K275; that span reads DGSS. Mg(2+) is bound at residue E281.

Belongs to the FBPase class 1 family. Homotetramer. Mg(2+) serves as cofactor.

The protein resides in the cytoplasm. It carries out the reaction beta-D-fructose 1,6-bisphosphate + H2O = beta-D-fructose 6-phosphate + phosphate. It participates in carbohydrate biosynthesis; gluconeogenesis. This Polaromonas sp. (strain JS666 / ATCC BAA-500) protein is Fructose-1,6-bisphosphatase class 1.